Reading from the N-terminus, the 621-residue chain is MSVDISNFPNLALADTPVELRSLPFERLPVLCNELREYLLRSVSRSSGHLASGLGTVELTVALHYVYNTPFDRLVWDVGHQAYPHKILTGRRDRMQSIRQKDGLHPFPWRGESEYDVLSVGHSSTSIGAALGMAVAAESEGLGRKVVAVIGDGAITAGMAFEALNHAGDVHKDMLVVLNDNEMSISENVGALNNHLARIMSGKLYTTIREGGKKVLAGLPPVKELAKRAEEHLKGMVVPGTLFEEFGFNYIGPIDGHDINALVETLRNMRNLKGPQLLHVKTKKGKGYEPAEKDPIGYHGVPKFNPDECTLPKASGGKPSFSAIFGQWLCDMAAKDERLVGITPAMREGSGLVKFSQQYPDRYFDVAIAEQHAVTFAAGLAIADQKPVVAIYSSFLQRAYDQLIHDVALQELPVLFAIDRAGLVGADGPTHQGAFDISFLRTVPNMVIMTPSDENECRQMLYTGYQCNGPAAVRYPRGSGTGIQVESEMQALALGKGRIVRQGKGTAILAFGTLLQQAKAAAEALDATLVDMRFVKPMDEALVFSLAATHDQFVTLEDNAIMGGAGSAVNELLMRSKQCKPVLNLGLPDRFVEQGTQEEIYALLGLDGTGIQRSIEQWLQA.

Residues His-80 and 121–123 (GHS) each bind thiamine diphosphate. Asp-152 serves as a coordination point for Mg(2+). Thiamine diphosphate is bound by residues 153–154 (GA), Asn-181, Tyr-288, and Glu-370. Asn-181 lines the Mg(2+) pocket.

This sequence belongs to the transketolase family. DXPS subfamily. In terms of assembly, homodimer. Mg(2+) serves as cofactor. It depends on thiamine diphosphate as a cofactor.

The enzyme catalyses D-glyceraldehyde 3-phosphate + pyruvate + H(+) = 1-deoxy-D-xylulose 5-phosphate + CO2. Its pathway is metabolic intermediate biosynthesis; 1-deoxy-D-xylulose 5-phosphate biosynthesis; 1-deoxy-D-xylulose 5-phosphate from D-glyceraldehyde 3-phosphate and pyruvate: step 1/1. In terms of biological role, catalyzes the acyloin condensation reaction between C atoms 2 and 3 of pyruvate and glyceraldehyde 3-phosphate to yield 1-deoxy-D-xylulose-5-phosphate (DXP). This Aeromonas hydrophila subsp. hydrophila (strain ATCC 7966 / DSM 30187 / BCRC 13018 / CCUG 14551 / JCM 1027 / KCTC 2358 / NCIMB 9240 / NCTC 8049) protein is 1-deoxy-D-xylulose-5-phosphate synthase.